Consider the following 292-residue polypeptide: Poly(U)-specific endoribonuclease-B (292 aa).

Positions 8–285 constitute an EndoU domain; sequence VNHELSKLFN…IGTAYPALLS (278 aa). Active-site residues include His162, His178, and Lys224.

Belongs to the ENDOU family. As to quaternary structure, monomer. It depends on Mn(2+) as a cofactor.

Its subcellular location is the nucleus. It carries out the reaction uridylyl-uridylyl-ribonucleotide-RNA = a 3'-end uridylyl-2',3'-cyclophospho-uridine-RNA + a 5'-end dephospho-ribonucleoside-RNA. Functionally, poly(U)-specific endoribonuclease involved in the processing of intron-encoded box C/D snoRNAs, such as U16 and U86. Releases products that have 2',3'-cyclic phosphate termini at the 3'-end. This chain is Poly(U)-specific endoribonuclease-B (endou-b), found in Xenopus laevis (African clawed frog).